The sequence spans 271 residues: Glutamate racemase (271 aa).

Substrate contacts are provided by residues 10–11 (DS) and 42–43 (YG). Catalysis depends on C73, which acts as the Proton donor/acceptor. 74-75 (NS) lines the substrate pocket. The active-site Proton donor/acceptor is the C183. Substrate is bound at residue 184 to 185 (TH).

This sequence belongs to the aspartate/glutamate racemases family.

The enzyme catalyses L-glutamate = D-glutamate. It functions in the pathway cell wall biogenesis; peptidoglycan biosynthesis. Its function is as follows. Provides the (R)-glutamate required for cell wall biosynthesis. This Saccharopolyspora erythraea (strain ATCC 11635 / DSM 40517 / JCM 4748 / NBRC 13426 / NCIMB 8594 / NRRL 2338) protein is Glutamate racemase.